Consider the following 687-residue polypeptide: Adhesion G-protein coupled receptor G1 (687 aa).

Residues 1–25 (MTAQSLLQMTLFLLSLLFLVQGAHG) form the signal peptide. Residue 26–33 (RGHREDFR) coordinates heparin. The Extracellular segment spans residues 26-402 (RGHREDFRFC…VEVDAVHKHY (377 aa)). 2 disulfides stabilise this stretch: Cys35-Cys91 and Cys121-Cys177. N-linked (GlcNAc...) asparagine glycosylation is found at Asn39, Asn148, and Asn171. 190–200 (LKHPQKASRRP) contacts heparin. One can recognise a GAIN-B domain in the interval 224–395 (DTVSFEEDRI…AVLMVSSVEV (172 aa)). Asn234, Asn303, Asn324, and Asn341 each carry an N-linked (GlcNAc...) asparagine glycan. 2 cysteine pairs are disulfide-bonded: Cys346–Cys377 and Cys366–Cys379. The interval 346–395 (CVFWVEDPTLSSPGHWSSAGCETVRRETQTSCFCNHLTYFAVLMVSSVEV) is GPS. The tract at residues 384–397 (YFAVLMVSSVEVDA) is stachel. Residues 403 to 423 (LSLLSYVGCVISALACVVTIA) form a helical membrane-spanning segment. The Cytoplasmic segment spans residues 424–442 (AYLCSRRKPRDYTIKVHMN). The chain crosses the membrane as a helical span at residues 443-463 (LLLAVFLLDMSFLLSEPVALT). The Extracellular segment spans residues 464–470 (GSEAGCR). The chain crosses the membrane as a helical span at residues 471–491 (AGAIFLHFSLLACLSWMGLEG). Residues 492 to 512 (YNLYRLVVEVFGTYVPGYLLK) are Cytoplasmic-facing. The helical transmembrane segment at 513–533 (LSAMGWGFPIFLVTLVALVDV) threads the bilayer. Over 534 to 570 (DNYGPIILAVHRTPESVIYPSMCWIRDSLVSYVTNLG) the chain is Extracellular. The chain crosses the membrane as a helical span at residues 571–591 (LFSLVFLFNMAMLGTMVVQIL). Over 592–603 (RLRPHTQKWSHV) the chain is Cytoplasmic. A helical transmembrane segment spans residues 604-624 (LTLLGLSLVLGLPWALIFFSF). Over 625 to 630 (ASGTFQ) the chain is Extracellular. The helical transmembrane segment at 631 to 651 (LVVLYLFSIITSFQGFLIFIW) threads the bilayer. At 652-687 (YWSMRLQARGGPSPLKSNSDSARLPISSGSTSSSRI) the chain is on the cytoplasmic side. The tract at residues 664–687 (SPLKSNSDSARLPISSGSTSSSRI) is disordered. The segment covering 678–687 (SSGSTSSSRI) has biased composition (low complexity).

The protein belongs to the G-protein coupled receptor 2 family. LN-TM7 subfamily. Heterodimer of 2 chains generated by proteolytic processing; the large extracellular N-terminal fragment (ADGRG1 NT) and the membrane-bound C-terminal fragment (ADGRG1-CT) predominantly remain associated and non-covalently linked. ADGRG1 NT self-associates in a trans-trans manner; the homophilic interaction enhances receptor signaling. Interacts with TGM2. Interacts with heparin; leading to the reduction of ADGRG1 shedding. Interacts with COL3A1. Part of a GPCR-tetraspanin complex at least consisting of ADGRG1, CD81, eventually CD9, and GNA11 in which CD81 is enhancing the association of ADGRG1 with GNA11. Autoproteolytically cleaved into 2 fragments; the large extracellular N-terminal fragment (ADGRG1 NT) and the membrane-bound C-terminal fragment (ADGRG1 CT) predominantly remain associated and non-covalently linked. Shedding to yield the secreted ADGRG1 N-terminal fragment seems to involve metalloprotease(s). In terms of processing, ubiquitinated. Undergoes polyubiquitination upon activation.

Its subcellular location is the cell membrane. The protein localises to the secreted. It is found in the membrane raft. Its activity is regulated as follows. Forms a heterodimer of 2 chains generated by proteolytic processing that remain associated through non-covalent interactions mediated by the GAIN-B domain. In the inactivated receptor, the Stachel sequence (also named stalk) is embedded in the GAIN-B domain, where it adopts a beta-strand conformation. On activation, the Stachel moves into the 7 transmembrane region and adopts a twisted hook-shaped configuration that forms contacts within the receptor, leading to coupling of a G-alpha protein, which activates signaling. The cleaved GAIN-B and N-terminal domains can then dissociate from the rest of the receptor. Its function is as follows. Adhesion G-protein coupled receptor (aGPCR) for steroid hormone 17alpha-hydroxypregnenolone (17-OH), which is involved in cell adhesion and cell-cell interactions. Ligand binding causes a conformation change that triggers signaling via guanine nucleotide-binding proteins (G proteins) and modulates the activity of downstream effectors, such as RhoA pathway. ADGRG1 is coupled to G(12) and/or G(13) G proteins (GNA12 and GNA13, respectively) and mediates the activation Rho small GTPases. Acts as a potent suppressor of ferroptosis: binding to 17-OH-binding initiates signaling that down-regulates CD36 and alleviates ferroptosis-induced liver injury. Ligand-binding also induces cell adhesion activity via association with proteins such as collagen III/COL3A1 and TGM2. Mediates cell matrix adhesion in developing neurons and hematopoietic stem cells. Involved in cortical development, specifically in maintenance of the pial basement membrane integrity and in cortical lamination: association with COL3A1 in the developing brain inhibits neuronal migration via activation of the RhoA pathway. Together with TGM2, acts as a regulator of myelination and myelin repair in oligodendrocyte precursor cells. Acts as a hemostatic sensor of shear force: G protein-coupled receptor signaling is activated in response to shear force in platelets, promoting G(13) G protein signaling, and platelet shape change and aggregation in a COL3A1-dependent manner. Acts as an inhibitor of VEGFA production thereby inhibiting angiogenesis through a signaling pathway mediated by PRKCA. Plays a role in the maintenance of hematopoietic stem cells in bone marrow niche. Plays an essential role in testis development. The chain is Adhesion G-protein coupled receptor G1 (ADGRG1) from Pongo pygmaeus (Bornean orangutan).